The chain runs to 248 residues: Segregation and condensation protein A (248 aa).

Belongs to the ScpA family. Component of a cohesin-like complex composed of ScpA, ScpB and the Smc homodimer, in which ScpA and ScpB bind to the head domain of Smc. The presence of the three proteins is required for the association of the complex with DNA.

It localises to the cytoplasm. In terms of biological role, participates in chromosomal partition during cell division. May act via the formation of a condensin-like complex containing Smc and ScpB that pull DNA away from mid-cell into both cell halves. This Bacillus cytotoxicus (strain DSM 22905 / CIP 110041 / 391-98 / NVH 391-98) protein is Segregation and condensation protein A.